The primary structure comprises 82 residues: Small ribosomal subunit protein uS17 (82 aa).

It belongs to the universal ribosomal protein uS17 family. As to quaternary structure, part of the 30S ribosomal subunit.

One of the primary rRNA binding proteins, it binds specifically to the 5'-end of 16S ribosomal RNA. This chain is Small ribosomal subunit protein uS17, found in Ehrlichia ruminantium (strain Gardel).